We begin with the raw amino-acid sequence, 264 residues long: Thymidylate synthase (264 aa).

Arg-21 contributes to the dUMP binding site. His-51 provides a ligand contact to (6R)-5,10-methylene-5,6,7,8-tetrahydrofolate. 126 to 127 (RR) serves as a coordination point for dUMP. Catalysis depends on Cys-146, which acts as the Nucleophile. Residues 166–169 (RSAD), Asn-177, and 207–209 (HIY) each bind dUMP. A (6R)-5,10-methylene-5,6,7,8-tetrahydrofolate-binding site is contributed by Asp-169. Residue Ala-263 participates in (6R)-5,10-methylene-5,6,7,8-tetrahydrofolate binding.

It belongs to the thymidylate synthase family. Bacterial-type ThyA subfamily. In terms of assembly, homodimer.

It localises to the cytoplasm. It catalyses the reaction dUMP + (6R)-5,10-methylene-5,6,7,8-tetrahydrofolate = 7,8-dihydrofolate + dTMP. Its pathway is pyrimidine metabolism; dTTP biosynthesis. Functionally, catalyzes the reductive methylation of 2'-deoxyuridine-5'-monophosphate (dUMP) to 2'-deoxythymidine-5'-monophosphate (dTMP) while utilizing 5,10-methylenetetrahydrofolate (mTHF) as the methyl donor and reductant in the reaction, yielding dihydrofolate (DHF) as a by-product. This enzymatic reaction provides an intracellular de novo source of dTMP, an essential precursor for DNA biosynthesis. This chain is Thymidylate synthase, found in Porphyromonas gingivalis (strain ATCC BAA-308 / W83).